We begin with the raw amino-acid sequence, 608 residues long: MGSDTLAAPPHGAPRVDRDVVSRFATCCRALGLTVNDRQRPADLTAARAGFAGLTHLAHDQCDAWIGLAAAGEVTPAVVDAVWRTVASAGVLQREIGLAAGELGFTYDTGWYLQFRATEPDDFQLAYAARLYEAGEFGEADGLVGEILARRPGWFDARWLQVAINHRAQRWSDVVRLLTPVVTLPSLDDVTSHAVRTALGISLARLGMFAPAMSYLEDPAGPIEVAAVDGALAKALTLRAQGEDDEATEVLQDLFATHPENTQVEQALLDTSFGLVTTTSARIEARSDPWDPETEPSEAEFVDPGAKDRKAHLLLEAEAELAEFIGLEEVKFQVARLKSSVAMAIRRQERGLAVAQRTNHLVFAGPPGTGKTTIARVVAKIYCGLGLLKKETVREVHRADLIGQHIGETEAKTNAIIDSALDGVLFLDEAYALVSTGAKNDFGLVAIDTLLARMENDRDRLVVIVAGYRKDLDAFLDTNEGLRSRFTRSIDFPSYTAPELVEIAVRMAEKRDSVFEKAAHDDMERLFTHLAQATTPDANGVERRSLDIAGNARFVRNLVERSEEEREYRLDHSDQEDFTDEEMMTITAGDVQRSAAPLLRGLGLSVPA.

Residues 284–303 (EARSDPWDPETEPSEAEFVD) form a disordered region. A compositionally biased stretch (acidic residues) spans 290-301 (WDPETEPSEAEF). 365-372 (GPPGTGKT) is an ATP binding site.

The protein belongs to the CbxX/CfxQ family. As to quaternary structure, part of the ESX-3 / type VII secretion system (T7SS), which is composed of cytosolic and membrane components.

It localises to the cytoplasm. Part of the ESX-3 specialized secretion system, which is required for siderophore-mediated iron acquisition and for the secretion of EsxH and EsxG. EccA3 exhibits ATPase activity and may provide energy for the export of ESX-3 substrates. The chain is ESX-3 secretion system protein EccA3 from Mycolicibacterium smegmatis (strain ATCC 700084 / mc(2)155) (Mycobacterium smegmatis).